Reading from the N-terminus, the 75-residue chain is Large ribosomal subunit protein bL31 (75 aa).

It belongs to the bacterial ribosomal protein bL31 family. Type A subfamily. In terms of assembly, part of the 50S ribosomal subunit.

Binds the 23S rRNA. The sequence is that of Large ribosomal subunit protein bL31 from Acidiphilium cryptum (strain JF-5).